Consider the following 134-residue polypeptide: CDGSH iron-sulfur domain-containing protein 2 homolog (134 aa).

Residues 1 to 35 (MESLSHLVKSTLPNYLSNLPVPDTLGGWFKLSFKD) are Lumenal-facing. Residues 36–58 (WLALIPPTVVVAGIGYTGYLAFC) form a helical membrane-spanning segment. The Cytoplasmic segment spans residues 59–134 (PAAQDRCSAK…DNVGPVVVKK (76 aa)). [2Fe-2S] cluster contacts are provided by Cys-101, Cys-103, Cys-112, and His-116.

This sequence belongs to the CISD protein family. CISD2 subfamily. It depends on [2Fe-2S] cluster as a cofactor.

It localises to the endoplasmic reticulum membrane. The protein is CDGSH iron-sulfur domain-containing protein 2 homolog of Drosophila willistoni (Fruit fly).